The chain runs to 107 residues: SH3 domain-binding glutamic acid-rich-like protein 2 (107 aa).

The short motif at 61–67 is the SH3-binding element; the sequence is QGNPLPP.

This sequence belongs to the SH3BGR family. As to expression, highly expressed in brain, placenta, liver and kidney. Expressed in retina.

The protein resides in the nucleus. The protein is SH3 domain-binding glutamic acid-rich-like protein 2 (SH3BGRL2) of Homo sapiens (Human).